The primary structure comprises 166 residues: Large ribosomal subunit protein uL10 (166 aa).

This sequence belongs to the universal ribosomal protein uL10 family. Part of the ribosomal stalk of the 50S ribosomal subunit. The N-terminus interacts with L11 and the large rRNA to form the base of the stalk. The C-terminus forms an elongated spine to which L12 dimers bind in a sequential fashion forming a multimeric L10(L12)X complex.

In terms of biological role, forms part of the ribosomal stalk, playing a central role in the interaction of the ribosome with GTP-bound translation factors. This is Large ribosomal subunit protein uL10 from Phytoplasma australiense.